Here is a 319-residue protein sequence, read N- to C-terminus: Acetyl-coenzyme A carboxylase carboxyl transferase subunit alpha (319 aa).

Residues 35–296 (DLDKEIKQLE…KQRLIEQLNE (262 aa)) enclose the CoA carboxyltransferase C-terminal domain.

It belongs to the AccA family. In terms of assembly, acetyl-CoA carboxylase is a heterohexamer composed of biotin carboxyl carrier protein (AccB), biotin carboxylase (AccC) and two subunits each of ACCase subunit alpha (AccA) and ACCase subunit beta (AccD).

The protein localises to the cytoplasm. It catalyses the reaction N(6)-carboxybiotinyl-L-lysyl-[protein] + acetyl-CoA = N(6)-biotinyl-L-lysyl-[protein] + malonyl-CoA. It participates in lipid metabolism; malonyl-CoA biosynthesis; malonyl-CoA from acetyl-CoA: step 1/1. Its function is as follows. Component of the acetyl coenzyme A carboxylase (ACC) complex. First, biotin carboxylase catalyzes the carboxylation of biotin on its carrier protein (BCCP) and then the CO(2) group is transferred by the carboxyltransferase to acetyl-CoA to form malonyl-CoA. This Aliivibrio salmonicida (strain LFI1238) (Vibrio salmonicida (strain LFI1238)) protein is Acetyl-coenzyme A carboxylase carboxyl transferase subunit alpha.